The primary structure comprises 310 residues: Homoserine kinase (310 aa).

95–105 contributes to the ATP binding site; that stretch reads PQSRGLGSSAA.

It belongs to the GHMP kinase family. Homoserine kinase subfamily.

It is found in the cytoplasm. The catalysed reaction is L-homoserine + ATP = O-phospho-L-homoserine + ADP + H(+). It participates in amino-acid biosynthesis; L-threonine biosynthesis; L-threonine from L-aspartate: step 4/5. In terms of biological role, catalyzes the ATP-dependent phosphorylation of L-homoserine to L-homoserine phosphate. The chain is Homoserine kinase from Corynebacterium kroppenstedtii (strain DSM 44385 / JCM 11950 / CIP 105744 / CCUG 35717).